Here is a 134-residue protein sequence, read N- to C-terminus: MTLNLCVLTPNRSIWNSEVKEIILSTNSGQIGVLPNHAPTATAVDIGILRIRLNDQWLTLALMGGFARIGNNEITILVNDAERGSDIDPQEAQQTLEIAEANLRKAEGKRQKIEANLALRRARTRVEASNTISS.

It belongs to the ATPase epsilon chain family. As to quaternary structure, F-type ATPases have 2 components, CF(1) - the catalytic core - and CF(0) - the membrane proton channel. CF(1) has five subunits: alpha(3), beta(3), gamma(1), delta(1), epsilon(1). CF(0) has three main subunits: a, b and c.

It is found in the plastid. The protein resides in the chloroplast thylakoid membrane. Its function is as follows. Produces ATP from ADP in the presence of a proton gradient across the membrane. The polypeptide is ATP synthase epsilon chain, chloroplastic (Spinacia oleracea (Spinach)).